A 400-amino-acid polypeptide reads, in one-letter code: Acetate kinase (400 aa).

Residue N7 participates in Mg(2+) binding. K14 contacts ATP. A substrate-binding site is contributed by R85. The active-site Proton donor/acceptor is D142. ATP contacts are provided by residues 202 to 206 (HLGNG), 278 to 280 (DMR), and 326 to 330 (GIGEN). E380 serves as a coordination point for Mg(2+).

It belongs to the acetokinase family. In terms of assembly, homodimer. Requires Mg(2+) as cofactor. Mn(2+) is required as a cofactor.

Its subcellular location is the cytoplasm. The catalysed reaction is acetate + ATP = acetyl phosphate + ADP. It participates in metabolic intermediate biosynthesis; acetyl-CoA biosynthesis; acetyl-CoA from acetate: step 1/2. Functionally, catalyzes the formation of acetyl phosphate from acetate and ATP. Can also catalyze the reverse reaction. The chain is Acetate kinase from Deinococcus deserti (strain DSM 17065 / CIP 109153 / LMG 22923 / VCD115).